The chain runs to 158 residues: Eukaryotic translation initiation factor 5A-3 (158 aa).

Positions 1–10 are enriched in basic and acidic residues; sequence MSDDEHHFES. Residues 1–23 form a disordered region; sequence MSDDEHHFESSDAGASKTYPQQA. Phosphoserine is present on serine 2. Lysine 51 bears the Hypusine mark.

The protein belongs to the eIF-5A family. Lys-52 undergoes hypusination, a unique post-translational modification that consists in the addition of a butylamino group from spermidine to lysine side chain, leading to the formation of the unusual amino acid hypusine. eIF-5As are the only known proteins to undergo this modification, which is essential for their function. As to expression, expressed in the vascular tissues of roots, stems and leaves. Localized in phloem companion cells rather than sieve-tube members. Not expressed in xylem or procambium. Detected in root tips and in the chalazal tissue of fertilized ovules.

Functionally, translation factor that promotes translation elongation and termination, particularly upon ribosome stalling at specific amino acid sequence contexts. Binds between the exit (E) and peptidyl (P) site of the ribosome and promotes rescue of stalled ribosome: specifically required for efficient translation of polyproline-containing peptides as well as other motifs that stall the ribosome. Acts as a ribosome quality control (RQC) cofactor by joining the RQC complex to facilitate peptidyl transfer during CAT tailing step. Involved in supporting growth and plays a regulatory role in the response to sub-lethal osmotic and nutrient stress. The polypeptide is Eukaryotic translation initiation factor 5A-3 (ELF5A-3) (Arabidopsis thaliana (Mouse-ear cress)).